The chain runs to 300 residues: Uricase (300 aa).

Residue Ala2 is modified to N-acetylalanine. Lys6 and Lys19 each carry N6-acetyllysine; alternate. Lys6 and Lys19 each carry N6-succinyllysine; alternate. Catalysis depends on Lys19, which acts as the Charge relay system. An N6-acetyllysine mark is found at Lys23 and Lys32. A phosphoserine mark is found at Ser35 and Ser59. The active-site Charge relay system is Thr64. 2 residues coordinate urate: Thr64 and Asp65. An N6-acetyllysine mark is found at Lys114, Lys118, and Lys160. Phe166 is a binding site for urate. N6-acetyllysine is present on residues Lys171 and Lys181. Arg183 provides a ligand contact to urate. 2 positions are modified to N6-acetyllysine; alternate: Lys217 and Lys224. 2 positions are modified to N6-succinyllysine; alternate: Lys217 and Lys224. Residue Ser228 is modified to Phosphoserine. Urate-binding residues include Val231, Gln232, and Asn258. The Charge relay system role is filled by His260. An N6-acetyllysine modification is found at Lys274. Tyr285 carries the post-translational modification Phosphotyrosine. Positions Ser298 to Leu300 match the Microbody targeting signal motif.

The protein belongs to the uricase family.

It is found in the peroxisome. It carries out the reaction urate + O2 + H2O = 5-hydroxyisourate + H2O2. It functions in the pathway purine metabolism; urate degradation; (S)-allantoin from urate: step 1/3. Functionally, catalyzes the oxidation of uric acid to 5-hydroxyisourate, which is further processed to form (S)-allantoin. The sequence is that of Uricase (UOX) from Oryctolagus cuniculus (Rabbit).